Reading from the N-terminus, the 842-residue chain is Gamma-aminobutyric acid type B receptor subunit 2 (842 aa).

The signal sequence occupies residues 1–17 (MSRWLSLLLFAVQAVGG). Topologically, residues 18–438 (YEAGEELSCK…TERRREHISS (421 aa)) are extracellular. Residues Asn-274, Asn-279, Asn-327, and Asn-366 are each glycosylated (N-linked (GlcNAc...) asparagine). Residues 439 to 459 (ILFLAMSLLALIGIFLALIFL) form a helical membrane-spanning segment. The Cytoplasmic portion of the chain corresponds to 460–477 (LINFRYRNHRFIKMSSPN). The chain crosses the membrane as a helical span at residues 478-498 (LNNIIIAGSICTFASVIMLGL). The Extracellular portion of the chain corresponds to 499–506 (DTRIVSPD). The chain crosses the membrane as a helical span at residues 507-527 (VFVWLCYTKTWTLCIGFTLSF). Residues 528-556 (GAMFSKTWRVHSIFTNIRMDRKAIKDSKL) lie on the Cytoplasmic side of the membrane. The helical transmembrane segment at 557-577 (FIILGILLFIDICVLVTWAFV) threads the bilayer. Residues 578–610 (SPFSYTVTELPHIPEDNIVIIPEVEKCNSSHSG) lie on the Extracellular side of the membrane. The N-linked (GlcNAc...) asparagine glycan is linked to Asn-605. Residues 611–631 (VFQAVLYAVKGVLMILGCFLA) traverse the membrane as a helical segment. The Cytoplasmic segment spans residues 632–647 (WETRHVNVPALNDSKY). The helical transmembrane segment at 648-668 (IGTSVYCCVVMSVLGLSTSVI) threads the bilayer. Over 669-676 (LQERVNEM) the chain is Extracellular. The helical transmembrane segment at 677-697 (FSLASFFVIFSTTLTLCLVFV) threads the bilayer. Over 698–842 (PKVIELARNP…VDPDEPSTKL (145 aa)) the chain is Cytoplasmic. The span at 725 to 740 (AKTSQPMSPQPRSDSS) shows a compositional bias: polar residues. Disordered regions lie at residues 725–744 (AKTSQPMSPQPRSDSSGDLI) and 791–842 (SPSS…STKL).

Belongs to the G-protein coupled receptor 3 family. In terms of assembly, may form a heterodimer with gbb-1. Expressed in cholinergic motor neurons.

Its subcellular location is the cell membrane. In terms of biological role, component of a heterodimeric G-protein coupled receptor for GABA, formed by gbb-1 and gbb-2. Within the heterodimeric GABA receptor, only gbb-1 seems to bind agonists, while gbb-2 mediates coupling to G proteins. Ligand binding causes a conformation change that triggers signaling via guanine nucleotide-binding proteins (G proteins) and modulates the activity of down-stream effectors, such as adenylate cyclase. Signaling inhibits adenylate cyclase, stimulates phospholipase A2, activates potassium channels, inactivates voltage-dependent calcium-channels and modulates inositol phospholipid hydrolysis. Plays a critical role in the fine-tuning of inhibitory synaptic transmission. Pre-synaptic GABA receptor inhibits neurotransmitter release by down-regulating high-voltage activated calcium channels, whereas postsynaptic GABA receptor decreases neuronal excitability by activating a prominent inwardly rectifying potassium (Kir) conductance that underlies the late inhibitory postsynaptic potentials. Along with gbb-1, may couple to the G(o)-alpha G-protein goa-1 to negatively regulate cholinergic receptor activity in the presence of high levels of acetylcholine in ventral cord motor neurons. As acetylcholine depolarizes body wall muscles, modulation of acetylcholine levels most likely results in the control of locomotory behavior. Regulates locomotory behavior in response to GABA release by GABAergic motor neurons. The chain is Gamma-aminobutyric acid type B receptor subunit 2 from Caenorhabditis elegans.